The primary structure comprises 487 residues: MKNAIVIGAGIGGLAAALRLRHQGYSVTIFEKNDYAGGKLHAIEKDGYRFDLGPSLFTLPHLVENLFALFPEEIIDFGYKSKAISFHYFWDDGTLFKASTDSSQFIEDASKVFKEEKSTIKKYLAKSKSKYELTKSLFLEKSLHKATTYFSLDTVKAIVHAPFLGLNNTLNDENSKFKNPKLTQLFNRYATYNGSSPYQTPGIMTMIPHLELGLGTYYPDGGMHRISQSLFELAQKVGVKFRFRESVTNITTSKNKVTGVETKNGSYLSDLVVSNMDIVPTYRNLMKDVPAPEKTLSQERSSSALIFYWGIDREFPELDLHNILFSEDYKTEFEHIFEHKTLAQDPTVYINITSKESSNDAPAGHENWFVMINAPGDYGQDWEQLVEESKKQIIAKIKKCLHVDISKHITTEYILTPQGIEKNTSSYRGALYGAASNNKFAAFLRHPNFNGKIKNLYHVGGSVHPGGGIPLCLLSAQITADLIQKEQ.

FAD contacts are provided by residues Gly-12, Glu-31, Lys-39, 55-56 (SL), Val-247, Asn-275, Leu-431, Gly-461, and 468-469 (GI).

This sequence belongs to the carotenoid/retinoid oxidoreductase family. In terms of assembly, monomer.

The enzyme catalyses rhodopin + A = (3E)-3,4-didehydrorhodopin + AH2. It carries out the reaction 1'-hydroxy-gamma-carotene + A = 1'-hydroxytorulene + AH2. It catalyses the reaction 1-hydroxy-all-trans-1,2-dihydro-neurosporene + A = demethylspheroidene + AH2. The catalysed reaction is 1,1'-dihydroxy-1,1',2,2'-tetrahydroneurosporene + A = 1'-hydroxy-demethylspheroidene + AH2. The enzyme catalyses 1,1'-dihydroxy-1,1',2,2'-tetrahydrolycopene + A = 1,1'-dihydroxy-3,4-didehydro-1,2-dihydrolycopene + AH2. It participates in carotenoid biosynthesis. In terms of biological role, catalyzes the introduction of a C-3,4 double bond into 1'-hydroxy-gamma-carotene and rhodopin (1-hydroxylycopene) to yield 1'-hydroxytorulene and (3E)-3,4-didehydrorhodopin, respectively. Can also use 1-hydroxy-all-trans-1,2-dihydro-neurosporene, 1,1'-dihydroxy-1,1',2,2'-tetrahydroneurosporene and 1,1'-dihydroxy-1,1',2,2'-tetrahydrolycopene. Probably involved in the synthesis of myxol, a gamma-carotene derivative. May use FAD as a proton acceptor. This chain is 1-hydroxycarotenoid 3,4-desaturase, found in Nonlabens dokdonensis (strain DSM 17205 / KCTC 12402 / DSW-6) (Donghaeana dokdonensis).